The following is a 119-amino-acid chain: Protein Wnt-4 (119 aa).

The O-palmitoleoyl serine; by PORCN moiety is linked to residue serine 1. 2 disulfide bridges follow: cysteine 69-cysteine 100 and cysteine 85-cysteine 95. Asparagine 86 carries N-linked (GlcNAc...) asparagine glycosylation.

Belongs to the Wnt family. Palmitoleoylation is required for efficient binding to frizzled receptors. Depalmitoleoylation leads to Wnt signaling pathway inhibition.

It is found in the secreted. The protein localises to the extracellular space. The protein resides in the extracellular matrix. Ligand for members of the frizzled family of seven transmembrane receptors. Plays an important role in embryonic development. In Eptatretus stoutii (Pacific hagfish), this protein is Protein Wnt-4 (WNT-4).